We begin with the raw amino-acid sequence, 491 residues long: Argininosuccinate lyase (491 aa).

The protein belongs to the lyase 1 family. Argininosuccinate lyase subfamily.

It is found in the cytoplasm. The catalysed reaction is 2-(N(omega)-L-arginino)succinate = fumarate + L-arginine. The protein operates within amino-acid biosynthesis; L-arginine biosynthesis; L-arginine from L-ornithine and carbamoyl phosphate: step 3/3. The polypeptide is Argininosuccinate lyase (Methanosarcina acetivorans (strain ATCC 35395 / DSM 2834 / JCM 12185 / C2A)).